The following is a 2432-amino-acid chain: Polyprotein P1234 (2432 aa).

One can recognise an Alphavirus-like MT domain in the interval 29-260; sequence ESLQVTPNDH…ESRKLLRSWH (232 aa). Residues 245 to 264 are nsP1 membrane-binding; the sequence is GSTLYTESRKLLRSWHLPSV. S-palmitoyl cysteine; by host attachment occurs at residues cysteine 418 and cysteine 420. The (+)RNA virus helicase ATP-binding domain maps to 692–844; the sequence is ELTNPPFHEF…HNICTEVCHK (153 aa). Residue 723–730 participates in a ribonucleoside 5'-triphosphate binding; the sequence is GVPGSGKS. Residues 845-993 enclose the (+)RNA virus helicase C-terminal domain; that stretch reads SISRRCTRPV…LEEWQEEHDK (149 aa). Residues 1006-1329 form the Peptidase C9 domain; the sequence is DAFQNKANVC…TKLSAVYAGE (324 aa). Residues 1007–1026 are nucleolus localization signal; it reads AFQNKANVCWAKSLVPVLDT. Catalysis depends on cysteine 1015, which acts as the For cysteine protease nsP2 activity. The Nuclear export signal motif lies at 1060–1069; it reads TKYYGVDLDS. Residue histidine 1085 is the For cysteine protease nsP2 activity of the active site. Positions 1184–1188 match the Nuclear localization signal motif; it reads PRRRV. In terms of domain architecture, Macro spans 1337 to 1495; sequence APSYRVKRAD…KKIQEAIDMR (159 aa). ADP-D-ribose is bound by residues aspartate 1346, asparagine 1360, glycine 1368, glycine 1448, valine 1449, and phenylalanine 1450. Zn(2+) contacts are provided by cysteine 1598, cysteine 1600, cysteine 1623, and cysteine 1641. Phosphothreonine; by host is present on residues threonine 1680 and threonine 1681. Positions 1759–1779 are disordered; that stretch reads RAAERPVPAPRKPTPAPRTAF. Pro residues predominate over residues 1765-1774; that stretch reads VPAPRKPTPA. 2 consecutive short sequence motifs (FGDF; binding to host G3BP1) follow at residues 1787–1790 and 1804–1807; these read FGDF. A RdRp catalytic domain is found at 2182–2297; sequence GDPVLETDIA…VHGVISDKLM (116 aa).

As to quaternary structure, interacts with non-structural protein 3. Interacts with RNA-directed RNA polymerase nsP4. Interacts with protease nsP2. interacts with itself. Interacts with mRNA-capping enzyme nsP1. Interacts with host DDX1. Interacts with host DDX3. Interacts (via C-terminus) with host G3BP1; this interaction inhibits the formation of host stress granules on viral mRNAs and the nsp3-G3BP1 complexes bind viral RNAs and probably orchestrate the assembly of viral replication complexes. Interacts (via C-terminus) with host G3BP2; this interaction inhibits the formation of host stress granules on viral mRNAs and the nsp3-G3BP2 complexes bind viral RNAs and probably orchestrate the assembly of viral replication complexes. In terms of assembly, interacts with mRNA-capping enzyme nsP1. Interacts with protease nsP2. interacts with itself. As to quaternary structure, interacts with RNA-directed RNA polymerase nsP4. Interacts with mRNA-capping enzyme nsP1. Interacts with KPNA1/karyopherin-alpha1; this interaction probably allows the active transport of protease nsP2 into the host nucleus. Mg(2+) serves as cofactor. Mn(2+) is required as a cofactor. Post-translationally, specific enzymatic cleavages in vivo yield mature proteins. The processing of the polyprotein is temporally regulated. In early stages (1.7 hpi), P1234 is first cleaved in trans through its nsP2 protease activity, releasing P123' and nsP4, which associate to form the early replication complex. At the same time, P1234 is also cut at the nsP1/nsP2 site early in infection but with lower efficiency. After replication of the viral minus-strand RNAs (4 hpi), the polyproteins are cut at the nsP1/nsP2 and nsP2/nsP3 sites very efficiently, preventing accumulation of P123' and P1234 and allowing the formation of the late replication complex. NsP3'/nsP4 site is not cleaved anymore and P34 is produced rather than nsP4. In terms of processing, specific enzymatic cleavages in vivo yield mature proteins. The processing of the polyprotein is temporally regulated. In early stages (1.7 hpi), P123' is cleaved at the nsP1/nsP2 site with low efficiency. After replication of the viral minus-strand RNAs (4 hpi), the polyproteins are cut at the nsP1/nsP2 and nsP2/nsP3 sites very efficiently, preventing accumulation of P123' and allowing the formation of the late replication complex. Specific enzymatic cleavages in vivo yield mature proteins. The processing of the polyprotein is temporally regulated. In early stages (1.7 hpi), P123 is cleaved at the nsP1/nsP2 site with low efficiency. After replication of the viral minus-strand RNAs (4 hpi), the polyproteins are cut at the nsP1/nsP2 and nsP2/nsP3 sites very efficiently, preventing accumulation of P123 and allowing the formation of the late replication complex. Post-translationally, palmitoylated by host palmitoyltransferases ZDHHC2 and ZDHHC19. In terms of processing, phosphorylated by host on serines and threonines. Ubiquitinated; targets the protein for rapid degradation via the ubiquitin system. Nsp4 is present in extremely low quantities due to low frequency of translation through the amber stop-codon and the degradation by the ubiquitin pathway.

The protein resides in the host cytoplasmic vesicle membrane. Its subcellular location is the host cell membrane. The protein localises to the host cell projection. It localises to the host filopodium. It is found in the host nucleus. The protein resides in the host cytoplasm. The enzyme catalyses GTP + S-adenosyl-L-methionine = N(7)-methyl-GTP + S-adenosyl-L-homocysteine. It catalyses the reaction N(7)-methyl-GTP + L-histidyl-[protein] = N(tele)-(N(7)-methylguanosine 5'-phospho)-L-histidyl-[protein] + diphosphate. It carries out the reaction N(tele)-(N(7)-methylguanosine 5'-phospho)-L-histidyl-[protein] + a 5'-end diphospho-(purine-ribonucleoside) in mRNA + H(+) = a 5'-end (N(7)-methyl 5'-triphosphoguanosine)-(purine-ribonucleoside) in mRNA + L-histidyl-[protein]. The catalysed reaction is a 5'-end triphospho-ribonucleoside in mRNA + H2O = a 5'-end diphospho-ribonucleoside in mRNA + phosphate + H(+). The enzyme catalyses a ribonucleoside 5'-triphosphate + H2O = a ribonucleoside 5'-diphosphate + phosphate + H(+). It catalyses the reaction ATP + H2O = ADP + phosphate + H(+). It carries out the reaction RNA(n) + a ribonucleoside 5'-triphosphate = RNA(n+1) + diphosphate. The catalysed reaction is RNA(n) + ATP = RNA(n)-3'-adenine ribonucleotide + diphosphate. The enzyme catalyses 4-O-(ADP-D-ribosyl)-L-aspartyl-[protein] + H2O = L-aspartyl-[protein] + ADP-D-ribose + H(+). It catalyses the reaction 5-O-(ADP-D-ribosyl)-L-glutamyl-[protein] + H2O = L-glutamyl-[protein] + ADP-D-ribose + H(+). It carries out the reaction ADP-alpha-D-ribose 1''-phosphate + H2O = ADP-D-ribose + phosphate. Inhibited by N-ethylmaleimide, Zn(2+), and Cu2(2+). Inactive precursor of the viral replicase, which is activated by cleavages carried out by the viral protease nsP2. Functionally, the early replication complex formed by the polyprotein P123 and nsP4 synthesizes minus-strand RNAs. As soon P123 is cleaved into mature proteins, the plus-strand RNAs synthesis begins. Its function is as follows. The early replication complex formed by the polyprotein P123' and nsP4 synthesizes minus-strand RNAs. Polyprotein P123' is a short-lived polyprotein that accumulates during early stage of infection. As soon P123' is cleaved into mature proteins, the plus-strand RNAs synthesis begins. In terms of biological role, cytoplasmic capping enzyme that catalyzes two virus-specific reactions: methyltransferase and nsP1 guanylyltransferase. mRNA-capping is necessary since all viral RNAs are synthesized in the cytoplasm, and host capping enzymes are restricted to the nucleus. The enzymatic reaction involves a covalent link between 7-methyl-GMP and nsP1, whereas eukaryotic capping enzymes form a covalent complex only with GMP. nsP1 capping consists in the following reactions: GTP is first methylated into 7-methyl-GMP and then is covalently linked to nsP1 to form the m7GMp-nsP1 complex from which 7-methyl-GMP complex is transferred to the mRNA to create the cap structure. NsP1 is also needed for the initiation of the minus-strand RNAs synthesis. Probably serves as a membrane anchor for the replication complex composed of nsP1-nsP4. Palmitoylated nsP1 is remodeling host cell cytoskeleton, and induces filopodium-like structure formation at the surface of the host cell. Multifunctional protein whose N-terminus is part of the RNA polymerase complex and displays NTPase, RNA triphosphatase and helicase activities. NTPase and RNA triphosphatase are involved in viral RNA capping and helicase keeps a check on the dsRNA replication intermediates. The C-terminus harbors a protease that specifically cleaves and releases the mature proteins. Required for the shutoff of minus-strand RNAs synthesis. Specifically inhibits the host IFN response by promoting the nuclear export of host STAT1. Also inhibits host transcription by inducing rapid proteasome-dependent degradation of POLR2A, a catalytic subunit of the RNAPII complex. The resulting inhibition of cellular protein synthesis serves to ensure maximal viral gene expression and to evade host immune response. Functionally, seems to be essential for minus-strand RNAs and subgenomic 26S mRNAs synthesis. Displays mono-ADP-ribosylhydrolase activity. ADP-ribosylation is a post-translational modification that controls various processes of the host cell and the virus probably needs to revert it for optimal viral replication. Binds proteins of FXR family and sequesters them into the viral RNA replication complexes thereby inhibiting the formation of host stress granules on viral mRNAs. The nsp3'-FXR complexes bind viral RNAs and probably orchestrate the assembly of viral replication complexes, thanks to the ability of FXR family members to self-assemble and bind DNA. Its function is as follows. Seems to be essential for minus-strand RNAs and subgenomic 26S mRNAs synthesis. Displays mono-ADP-ribosylhydrolase activity. ADP-ribosylation is a post-translational modification that controls various processes of the host cell and the virus probably needs to revert it for optimal viral replication. Binds proteins of G3BP family and sequesters them into the viral RNA replication complexes thereby inhibiting the formation of host stress granules on viral mRNAs. The nsp3-G3BP complexes bind viral RNAs and probably orchestrate the assembly of viral replication complexes, thanks to the ability of G3BP family members to self-assemble and bind DNA. In terms of biological role, RNA dependent RNA polymerase. Replicates genomic and antigenomic RNA by recognizing replications specific signals. The early replication complex formed by the polyprotein P123 and nsP4 synthesizes minus-strand RNAs. The late replication complex composed of fully processed nsP1-nsP4 is responsible for the production of genomic and subgenomic plus-strand RNAs. In Aedes (Middle-African hedgehog), this protein is Polyprotein P1234.